Consider the following 263-residue polypeptide: uncharacterized protein (263 aa).

Positions 1–22 are cleaved as a signal peptide; sequence MEYLKRLALLISVIILTIFIMG. The N-palmitoyl cysteine moiety is linked to residue C23. A lipid anchor (S-diacylglycerol cysteine) is attached at C23.

Belongs to the staphylococcal tandem lipoprotein family.

Its subcellular location is the cell membrane. This is an uncharacterized protein from Staphylococcus aureus (strain USA300).